Consider the following 427-residue polypeptide: Tol-Pal system protein TolB (427 aa).

Residues Met-1–Ala-23 form the signal peptide.

Belongs to the TolB family. In terms of assembly, the Tol-Pal system is composed of five core proteins: the inner membrane proteins TolA, TolQ and TolR, the periplasmic protein TolB and the outer membrane protein Pal. They form a network linking the inner and outer membranes and the peptidoglycan layer.

The protein resides in the periplasm. Functionally, part of the Tol-Pal system, which plays a role in outer membrane invagination during cell division and is important for maintaining outer membrane integrity. This chain is Tol-Pal system protein TolB, found in Haemophilus influenzae (strain PittGG).